Here is a 98-residue protein sequence, read N- to C-terminus: Large ribosomal subunit protein uL23 (98 aa).

It belongs to the universal ribosomal protein uL23 family. As to quaternary structure, part of the 50S ribosomal subunit. Contacts protein L29, and trigger factor when it is bound to the ribosome.

Its function is as follows. One of the early assembly proteins it binds 23S rRNA. One of the proteins that surrounds the polypeptide exit tunnel on the outside of the ribosome. Forms the main docking site for trigger factor binding to the ribosome. The sequence is that of Large ribosomal subunit protein uL23 from Caulobacter sp. (strain K31).